The chain runs to 209 residues: Octanoyltransferase (209 aa).

The BPL/LPL catalytic domain occupies 28-203 (NATPETLLLL…RFQGLLDEWL (176 aa)). Substrate is bound by residues 66–73 (RGGDVTFH), 133–135 (AIG), and 146–148 (GFA). Cys164 serves as the catalytic Acyl-thioester intermediate.

Belongs to the LipB family.

Its subcellular location is the cytoplasm. The enzyme catalyses octanoyl-[ACP] + L-lysyl-[protein] = N(6)-octanoyl-L-lysyl-[protein] + holo-[ACP] + H(+). It participates in protein modification; protein lipoylation via endogenous pathway; protein N(6)-(lipoyl)lysine from octanoyl-[acyl-carrier-protein]: step 1/2. Catalyzes the transfer of endogenously produced octanoic acid from octanoyl-acyl-carrier-protein onto the lipoyl domains of lipoate-dependent enzymes. Lipoyl-ACP can also act as a substrate although octanoyl-ACP is likely to be the physiological substrate. This is Octanoyltransferase from Pelobacter propionicus (strain DSM 2379 / NBRC 103807 / OttBd1).